The following is a 58-amino-acid chain: Putative antitoxin VapB16 (58 aa).

Putative antitoxin component of a possible type II toxin-antitoxin (TA) system. The cognate toxin is VapC16. The protein is Putative antitoxin VapB16 (vapB16) of Mycobacterium tuberculosis (strain ATCC 25618 / H37Rv).